Consider the following 143-residue polypeptide: Large ribosomal subunit protein uL11 (143 aa).

It belongs to the universal ribosomal protein uL11 family. In terms of assembly, part of the ribosomal stalk of the 50S ribosomal subunit. Interacts with L10 and the large rRNA to form the base of the stalk. L10 forms an elongated spine to which L12 dimers bind in a sequential fashion forming a multimeric L10(L12)X complex. Post-translationally, one or more lysine residues are methylated.

Its function is as follows. Forms part of the ribosomal stalk which helps the ribosome interact with GTP-bound translation factors. The protein is Large ribosomal subunit protein uL11 of Laribacter hongkongensis (strain HLHK9).